A 391-amino-acid chain; its full sequence is Arrestin-C (391 aa).

Over residues 369–379 (ARQEPGGREES) the composition is skewed to basic and acidic residues. The disordered stretch occupies residues 369–391 (ARQEPGGREESQEALAAEGDEGS).

This sequence belongs to the arrestin family. Homodimer; disulfide-linked in response to retinal illumination. Interacts with CXCR4; the interaction is dependent on the C-terminal phosphorylation of CXCR4 and modulates the calcium ion mobilization activity of CXCR4. Interacts with GPR84.

It is found in the photoreceptor inner segment. The protein localises to the cell projection. It localises to the cilium. Its subcellular location is the photoreceptor outer segment. In terms of biological role, may play a role in an as yet undefined retina-specific signal transduction. Could bind to photoactivated-phosphorylated red/green opsins. The sequence is that of Arrestin-C (ARR3) from Sus scrofa (Pig).